We begin with the raw amino-acid sequence, 481 residues long: MEKESQENSTRPDASSTVFSSSKSTCASPSYLKEAGDLISRLPDDILQLILSYLPTRLAIKTSVLSRRWRHVWSDTWSLSFHRDRPDAPCINRILDRYRAPKMMSFRICSCCRAACISRPDTHADIDSWINFAMSRNVENLSLYLDEDKYDIPEFLYINSSLKQLYLDFGCKKDFISLNPKCSVSWTSLKNLSLYHCNISDESIAIILSGCPILESLLLFFCKKLKVLDLSKSPRLITLEITRRCRMEPTQLVAPHIRCLRLINSEKPCALVDVSSLSQAELDITAYAIVDNKLEADFHQTMVVKMLEKCQNVEKLTLGANFLKMLSLAELRGVSFPKLKAKALILETMISRYVIHGIVKVLQNSPDLKKLTIHPMGSAGSYPIPEEHIDIYLDSHGLNWDPSWSSEFKNTSRRNVESKQVASFLQLVLKTISTLELIVARLEGYIKGRRFVELRQMVPMLPRNNDVSIVLSSRRKRFRVT.

Positions 1–28 are disordered; that stretch reads MEKESQENSTRPDASSTVFSSSKSTCAS. The segment covering 14–28 has biased composition (low complexity); sequence ASSTVFSSSKSTCAS. Positions 36 to 84 constitute an F-box domain; sequence GDLISRLPDDILQLILSYLPTRLAIKTSVLSRRWRHVWSDTWSLSFHRD. LRR repeat units follow at residues 118 to 145, 196 to 221, 295 to 320, 350 to 375, and 413 to 439; these read SRPD…SLYL, HCNI…LLFF, EADF…TLGA, ISRY…TIHP, and RRNV…ELIV.

In Arabidopsis thaliana (Mouse-ear cress), this protein is F-box/LRR-repeat protein At3g03360.